We begin with the raw amino-acid sequence, 254 residues long: 5-oxoprolinase subunit A (254 aa).

Belongs to the LamB/PxpA family. As to quaternary structure, forms a complex composed of PxpA, PxpB and PxpC.

It catalyses the reaction 5-oxo-L-proline + ATP + 2 H2O = L-glutamate + ADP + phosphate + H(+). Functionally, catalyzes the cleavage of 5-oxoproline to form L-glutamate coupled to the hydrolysis of ATP to ADP and inorganic phosphate. The protein is 5-oxoprolinase subunit A of Burkholderia orbicola (strain MC0-3).